The following is a 430-amino-acid chain: Asparagine--tRNA ligase (430 aa).

The protein belongs to the class-II aminoacyl-tRNA synthetase family. Homodimer.

The protein resides in the cytoplasm. It carries out the reaction tRNA(Asn) + L-asparagine + ATP = L-asparaginyl-tRNA(Asn) + AMP + diphosphate + H(+). This chain is Asparagine--tRNA ligase, found in Staphylococcus aureus (strain MW2).